The following is a 392-amino-acid chain: D-amino-acid oxidase 2 (392 aa).

FAD-binding residues include serine 10, isoleucine 13, arginine 33, aspartate 34, alanine 45, serine 46, glycine 50, and asparagine 52. The anthranilate site is built by phenylalanine 56, tyrosine 245, tyrosine 262, and arginine 311. Residues tyrosine 245, tyrosine 262, and arginine 311 each coordinate (R)-lactate. Residues arginine 311, glycine 361, serine 362, glycine 364, and glutamine 366 each coordinate FAD. Residue serine 362 coordinates anthranilate. Residue serine 362 participates in (R)-lactate binding. Residues 390 to 392 (AKL) carry the Microbody targeting signal motif.

It belongs to the DAMOX/DASOX family. It depends on FAD as a cofactor.

It localises to the peroxisome matrix. It catalyses the reaction a D-alpha-amino acid + O2 + H2O = a 2-oxocarboxylate + H2O2 + NH4(+). The catalysed reaction is D-methionine + O2 + H2O = 4-methylsulfanyl-2-oxobutanoate + H2O2 + NH4(+). The enzyme catalyses D-serine + O2 + H2O = 3-hydroxypyruvate + H2O2 + NH4(+). It carries out the reaction D-histidine + O2 + H2O = 3-(imidazol-5-yl)pyruvate + H2O2 + NH4(+). It catalyses the reaction D-proline + O2 = 1-pyrroline-2-carboxylate + H2O2. The catalysed reaction is D-alanine + O2 + H2O = pyruvate + H2O2 + NH4(+). The enzyme catalyses D-leucine + O2 + H2O = 4-methyl-2-oxopentanoate + H2O2 + NH4(+). It carries out the reaction D-valine + O2 + H2O = 3-methyl-2-oxobutanoate + H2O2 + NH4(+). In terms of biological role, catalyzes the oxidative deamination of D-amino acids with broad substrate specificity. Enables the organism to utilize D-amino acids as a source of nutrients. Enables the organism to utilize D-alanine, D-cysteine, D-histidine, D-leucine, D-methionine, D-phenylalanine, D-proline, D-serine, D-threonine, D-aspartate and D-valine as a nitrogen source and may also contribute to utlization of D-tryptophan, D-tyrosine and D-asparagine as a nitrogen source. Protects the organism from the toxicity of D-amino acids, including from D-alanine. May play a role in its interaction with the host. This Cryptococcus deuterogattii (strain R265) (Cryptococcus gattii VGII (strain R265)) protein is D-amino-acid oxidase 2.